Here is a 30-residue protein sequence, read N- to C-terminus: Trypsin inhibitor 3 (30 aa).

3 disulfides stabilise this stretch: cysteine 4–cysteine 21, cysteine 11–cysteine 23, and cysteine 17–cysteine 29.

It belongs to the protease inhibitor I7 (squash-type serine protease inhibitor) family.

It localises to the secreted. Its function is as follows. Inhibits lysyl endopeptidase and trypsin. This Cucumis melo var. conomon (Oriental pickling melon) protein is Trypsin inhibitor 3.